A 266-amino-acid polypeptide reads, in one-letter code: Putative carbamate hydrolase RutD (266 aa).

This sequence belongs to the AB hydrolase superfamily. Hydrolase RutD family.

The enzyme catalyses carbamate + 2 H(+) = NH4(+) + CO2. In terms of biological role, involved in pyrimidine catabolism. May facilitate the hydrolysis of carbamate, a reaction that can also occur spontaneously. The polypeptide is Putative carbamate hydrolase RutD (Escherichia coli O139:H28 (strain E24377A / ETEC)).